The sequence spans 162 residues: Cyanate hydratase (162 aa).

Residues arginine 103, glutamate 106, and serine 129 contribute to the active site.

This sequence belongs to the cyanase family.

It catalyses the reaction cyanate + hydrogencarbonate + 3 H(+) = NH4(+) + 2 CO2. Catalyzes the reaction of cyanate with bicarbonate to produce ammonia and carbon dioxide. This chain is Cyanate hydratase, found in Pyrenophora tritici-repentis (strain Pt-1C-BFP) (Wheat tan spot fungus).